Consider the following 522-residue polypeptide: Na(+)/H(+) antiporter NhaB (522 aa).

Helical transmembrane passes span 25 to 45, 49 to 69, 87 to 107, 128 to 162, 201 to 221, 237 to 257, 302 to 322, 356 to 376, 388 to 408, 446 to 466, and 476 to 496; these read VFLV…GWLL, FIFT…GMLA, ILAN…IYFM, LSLA…FYGV, LMMH…VGEP, FFFR…VTCI, VFVG…VGLI, LVVF…APVI, LLLF…VFVA, ATPN…SPLI, and MALP…EYVL.

This sequence belongs to the NhaB Na(+)/H(+) (TC 2.A.34) antiporter family.

The protein resides in the cell inner membrane. It carries out the reaction 2 Na(+)(in) + 3 H(+)(out) = 2 Na(+)(out) + 3 H(+)(in). In terms of biological role, na(+)/H(+) antiporter that extrudes sodium in exchange for external protons. The protein is Na(+)/H(+) antiporter NhaB of Actinobacillus succinogenes (strain ATCC 55618 / DSM 22257 / CCUG 43843 / 130Z).